The following is a 178-amino-acid chain: MEQFHGTTIVSVRRGDKVALGGDGQVTLGNIVMKGGARKVRRIYNNQVLVGFAGGTADAFSLLDRFEAKLEKHQGNLTRAAVELAKDWRTDRMLRRLEAMLIAADATTTLVITGNGDVLDPEGGICAIGSGGAYAQAAARALAENTELSPREIVEKSLEIAGDMCIYTNHNRIIETIE.

T7 is an active-site residue. G162, C165, and T168 together coordinate Na(+).

This sequence belongs to the peptidase T1B family. HslV subfamily. A double ring-shaped homohexamer of HslV is capped on each side by a ring-shaped HslU homohexamer. The assembly of the HslU/HslV complex is dependent on binding of ATP.

Its subcellular location is the cytoplasm. The enzyme catalyses ATP-dependent cleavage of peptide bonds with broad specificity.. Its activity is regulated as follows. Allosterically activated by HslU binding. Functionally, protease subunit of a proteasome-like degradation complex believed to be a general protein degrading machinery. This chain is ATP-dependent protease subunit HslV, found in Burkholderia ambifaria (strain ATCC BAA-244 / DSM 16087 / CCUG 44356 / LMG 19182 / AMMD) (Burkholderia cepacia (strain AMMD)).